The following is a 220-amino-acid chain: Adenylate kinase (220 aa).

10–15 (GAGKGT) is an ATP binding site. An NMP region spans residues 30–59 (STGDMLRAAVKAGSPLGVEAKGYMDAGKLV). AMP contacts are provided by residues Thr-31, Arg-36, 57-59 (KLV), 85-88 (GFPR), and Gln-92. Residues 122-159 (GRRTHAASGRTYHVKFNPPKVEGQDDVTGEPLIQRDDD) form an LID region. Residues Arg-123 and 132-133 (TY) contribute to the ATP site. Arg-156 and Arg-167 together coordinate AMP. Gly-206 provides a ligand contact to ATP.

The protein belongs to the adenylate kinase family. Monomer.

It localises to the cytoplasm. The catalysed reaction is AMP + ATP = 2 ADP. It participates in purine metabolism; AMP biosynthesis via salvage pathway; AMP from ADP: step 1/1. Its function is as follows. Catalyzes the reversible transfer of the terminal phosphate group between ATP and AMP. Plays an important role in cellular energy homeostasis and in adenine nucleotide metabolism. The sequence is that of Adenylate kinase from Burkholderia vietnamiensis (strain G4 / LMG 22486) (Burkholderia cepacia (strain R1808)).